The sequence spans 130 residues: Ribosome biogenesis inhibitor MINAS-60 (130 aa).

A disordered region spans residues 61-130; it reads SRVRRIPTRP…RRRRPVTSSC (70 aa). Basic residues predominate over residues 109 to 130; sequence KGRRRRRRRMRRRRRRPVTSSC.

Interacts with 60S ribosome assembly factors GTPBP4 and MRTO4.

The protein localises to the nucleus. It is found in the nucleolus. In terms of biological role, acts as a late-stage inhibitor of pre-60S ribosome assembly by preventing pre-60S ribosome export from nucleus. The polypeptide is Ribosome biogenesis inhibitor MINAS-60 (Homo sapiens (Human)).